Here is a 238-residue protein sequence, read N- to C-terminus: CFA/I fimbrial subunit A (238 aa).

An N-terminal signal peptide occupies residues 1 to 19; it reads MHKLFYLLSLLMAPFVANA.

It localises to the fimbrium. Its function is as follows. Might function as a shuttle protein in the transport of fimbria through the periplasmic space or might function as an adhesin. In Escherichia coli, this protein is CFA/I fimbrial subunit A (cfaA).